Reading from the N-terminus, the 20-residue chain is Disintegrin (20 aa).

Residues 1–20 form the Disintegrin domain; the sequence is EAGEECDCGTPENPCCDAAT. Cystine bridges form between Cys-6–Cys-15 and Cys-8–Cys-16.

The protein belongs to the venom metalloproteinase (M12B) family. P-II subfamily. P-IIa sub-subfamily. Monomer. In terms of tissue distribution, expressed by the venom gland.

It localises to the secreted. Its function is as follows. Inhibits fibrinogen interaction with platelets. Acts by binding to alpha-IIb/beta-3 (ITGA2B/ITGB3) on the platelet surface and inhibits aggregation induced by ADP, thrombin, platelet-activating factor and collagen. This chain is Disintegrin, found in Bothrops fonsecai (Fonseca's lancehead).